We begin with the raw amino-acid sequence, 397 residues long: G2/mitotic-specific cyclin-B1 (397 aa).

A compositionally biased stretch (polar residues) spans 1–17; that stretch reads MALRVTRNTRLASSENQ. The segment at 1–30 is disordered; the sequence is MALRVTRNTRLASSENQGALPGKAAVANKP.

Belongs to the cyclin family. Cyclin AB subfamily. In terms of assembly, interacts with the CDK1 protein kinase to form a serine/threonine kinase holoenzyme complex also known as maturation promoting factor (MPF). The cyclin subunit imparts substrate specificity to the complex.

Its function is as follows. Essential for the control of the cell cycle at the G2/M (mitosis) transition. The sequence is that of G2/mitotic-specific cyclin-B1 (ccnb1) from Carassius auratus (Goldfish).